The sequence spans 151 residues: uncharacterized protein (151 aa).

3 helical membrane passes run 14-34 (GAAL…YWLI), 45-65 (ISLV…GYLI), and 91-111 (VIVA…ASLI).

The protein resides in the cell membrane. This is an uncharacterized protein from Bacillus subtilis (strain 168).